A 442-amino-acid chain; its full sequence is Ribosomal protein uS12 methylthiotransferase RimO (442 aa).

One can recognise an MTTase N-terminal domain in the interval 8-118; the sequence is PKVGFVSLGC…VLGHVHKYVE (111 aa). The [4Fe-4S] cluster site is built by Cys17, Cys53, Cys82, Cys150, Cys154, and Cys157. In terms of domain architecture, Radical SAM core spans 136–373; sequence LTPRHYAYLK…MELQQQVSIR (238 aa). One can recognise a TRAM domain in the interval 376 to 442; the sequence is ARKVGKEMLV…EYDLWASLID (67 aa).

Belongs to the methylthiotransferase family. RimO subfamily. [4Fe-4S] cluster serves as cofactor.

It is found in the cytoplasm. It carries out the reaction L-aspartate(89)-[ribosomal protein uS12]-hydrogen + (sulfur carrier)-SH + AH2 + 2 S-adenosyl-L-methionine = 3-methylsulfanyl-L-aspartate(89)-[ribosomal protein uS12]-hydrogen + (sulfur carrier)-H + 5'-deoxyadenosine + L-methionine + A + S-adenosyl-L-homocysteine + 2 H(+). In terms of biological role, catalyzes the methylthiolation of an aspartic acid residue of ribosomal protein uS12. The chain is Ribosomal protein uS12 methylthiotransferase RimO from Aeromonas hydrophila subsp. hydrophila (strain ATCC 7966 / DSM 30187 / BCRC 13018 / CCUG 14551 / JCM 1027 / KCTC 2358 / NCIMB 9240 / NCTC 8049).